Here is a 123-residue protein sequence, read N- to C-terminus: Small ribosomal subunit protein uS12cz/uS12cy (123 aa).

This sequence belongs to the universal ribosomal protein uS12 family. Part of the 30S ribosomal subunit.

Its subcellular location is the plastid. It localises to the chloroplast. With S4 and S5 plays an important role in translational accuracy. Located at the interface of the 30S and 50S subunits. In Coffea arabica (Arabian coffee), this protein is Small ribosomal subunit protein uS12cz/uS12cy (rps12-A).